The following is a 322-amino-acid chain: Arginase (322 aa).

Mn(2+) contacts are provided by His-113, Asp-141, His-143, and Asp-145. Substrate is bound by residues 143 to 147 (HADIN), 154 to 156 (SGN), and Asp-200. Residues Asp-247 and Asp-249 each contribute to the Mn(2+) site. The substrate site is built by Thr-261 and Glu-292.

The protein belongs to the arginase family. In terms of assembly, homotrimer. Mn(2+) is required as a cofactor.

The catalysed reaction is L-arginine + H2O = urea + L-ornithine. Its pathway is nitrogen metabolism; urea cycle; L-ornithine and urea from L-arginine: step 1/1. The protein is Arginase (ARG) of Coccidioides immitis (strain RS) (Valley fever fungus).